Consider the following 284-residue polypeptide: Lipoyl synthase (284 aa).

Cys38, Cys43, Cys49, Cys64, Cys68, Cys71, and Ser277 together coordinate [4Fe-4S] cluster. The 217-residue stretch at 50 to 266 (WSRGTATFLL…RDEALGMGFS (217 aa)) folds into the Radical SAM core domain.

It belongs to the radical SAM superfamily. Lipoyl synthase family. Requires [4Fe-4S] cluster as cofactor.

It localises to the cytoplasm. It carries out the reaction [[Fe-S] cluster scaffold protein carrying a second [4Fe-4S](2+) cluster] + N(6)-octanoyl-L-lysyl-[protein] + 2 oxidized [2Fe-2S]-[ferredoxin] + 2 S-adenosyl-L-methionine + 4 H(+) = [[Fe-S] cluster scaffold protein] + N(6)-[(R)-dihydrolipoyl]-L-lysyl-[protein] + 4 Fe(3+) + 2 hydrogen sulfide + 2 5'-deoxyadenosine + 2 L-methionine + 2 reduced [2Fe-2S]-[ferredoxin]. It functions in the pathway protein modification; protein lipoylation via endogenous pathway; protein N(6)-(lipoyl)lysine from octanoyl-[acyl-carrier-protein]: step 2/2. In terms of biological role, catalyzes the radical-mediated insertion of two sulfur atoms into the C-6 and C-8 positions of the octanoyl moiety bound to the lipoyl domains of lipoate-dependent enzymes, thereby converting the octanoylated domains into lipoylated derivatives. The protein is Lipoyl synthase of Chlorobium phaeovibrioides (strain DSM 265 / 1930) (Prosthecochloris vibrioformis (strain DSM 265)).